Here is a 183-residue protein sequence, read N- to C-terminus: Translation initiation factor IF-3 (183 aa).

The protein belongs to the IF-3 family. In terms of assembly, monomer.

Its subcellular location is the cytoplasm. Its function is as follows. IF-3 binds to the 30S ribosomal subunit and shifts the equilibrium between 70S ribosomes and their 50S and 30S subunits in favor of the free subunits, thus enhancing the availability of 30S subunits on which protein synthesis initiation begins. In Pseudomonas putida (strain ATCC 700007 / DSM 6899 / JCM 31910 / BCRC 17059 / LMG 24140 / F1), this protein is Translation initiation factor IF-3.